Reading from the N-terminus, the 720-residue chain is uncharacterized protein (720 aa).

The N-myristoyl glycine; by host moiety is linked to residue G2.

This is an uncharacterized protein from Cryphonectria parasitica mycoreovirus 1 (strain 9B21) (CpMYRV-1).